The primary structure comprises 366 residues: Histone-lysine N-methyltransferase SETD7 (366 aa).

3 MORN repeats span residues 36 to 58 (FEGN…DGST), 59 to 81 (LEGY…DGGV), and 106 to 128 (FKGQ…DGGS). The region spanning 214–336 (ERVYVADSLI…AEEELTVAYG (123 aa)) is the SET domain. S-adenosyl-L-methionine-binding positions include 226-228 (AGE), Asn296, His297, and Glu356.

Belongs to the class V-like SAM-binding methyltransferase superfamily. Histone-lysine methyltransferase family. SET7 subfamily. Interacts with IPF1/PDX-1.

It localises to the nucleus. It is found in the chromosome. It carries out the reaction L-lysyl(4)-[histone H3] + S-adenosyl-L-methionine = N(6)-methyl-L-lysyl(4)-[histone H3] + S-adenosyl-L-homocysteine + H(+). The enzyme catalyses L-lysyl-[protein] + S-adenosyl-L-methionine = N(6)-methyl-L-lysyl-[protein] + S-adenosyl-L-homocysteine + H(+). In terms of biological role, histone methyltransferase that specifically monomethylates 'Lys-4' of histone H3. H3 'Lys-4' methylation represents a specific tag for epigenetic transcriptional activation. Plays a central role in the transcriptional activation of genes such as collagenase or insulin. Recruited by IPF1/PDX-1 to the insulin promoter, leading to activate transcription. Also has methyltransferase activity toward non-histone proteins such as CGAS, p53/TP53, TAF10, and possibly TAF7 by recognizing and binding the [KR]-[STA]-K in substrate proteins. Monomethylates 'Lys-189' of TAF10, leading to increase the affinity of TAF10 for RNA polymerase II. Monomethylates 'Lys-372' of p53/TP53, stabilizing p53/TP53 and increasing p53/TP53-mediated transcriptional activation. Monomethylates 'Lys-491' of CGAS, promoting interaction between SGF29 and CGAS. The sequence is that of Histone-lysine N-methyltransferase SETD7 (Setd7) from Mus musculus (Mouse).